A 646-amino-acid polypeptide reads, in one-letter code: MASCPKAIWNWRFQRAVFRTVQLLCFSVLIFEVINQKEVSAWTYHYSNKTYSWNYSRAFCQKYYTDLVAIQNKNEIAYLNETIPYYNSYYWIGIRKINNKWTWVGTKKTLTEEAENWADNEPNNKRNNQDCVEIYIKSLSAPGKWNDEPCWKRKRALCYRASCQDMSCSKQGECIETIGNYTCSCYPGFYGPECEYVRECGEFDLPQHVHMNCSHPLGNFSFNSHCSFHCAEGYALNGPSELECLASGIWTNSPPQCVAVQCPALKSPEQGSMSCVQSAEAFQHQSSCSFSCEEGFALVGPEVVHCTALGVWTAPTPVCKALQCQDLPTSTKARVNCSHPFGDFRYQSTCSFTCDEGSFLVGASVLQCLDTGNWDAPFPECQAVTCAALPNPQNGEKTCVQPLGGSSYESTCWFTCHEGFSLSGPERLDCTPSGHWTGSPPTCEEVDTVSAPAPGVQCPTLIAPKQGTMSCQHHVRNFGLNTTCHFGCKAGFTLLGDSALQCRPSRQWTAAAPTCRAVKCAKLPVTEPIVMNCSNPWGNFSYGSTCSFHCPEGQLLNGSERTVCQENGQWSTTMPTCQAGPLTIQETLTYVGGAAAGTTGLVTGSILLALLRRRCRQKDDGKSPLNPQSHLGTYGVFTNAAFDPSP.

An N-terminal signal peptide occupies residues 1-41 (MASCPKAIWNWRFQRAVFRTVQLLCFSVLIFEVINQKEVSA). At 42 to 587 (WTYHYSNKTY…QAGPLTIQET (546 aa)) the chain is on the extracellular side. N-linked (GlcNAc...) asparagine glycans are attached at residues N48, N54, and N80. The 101-residue stretch at 58-158 (AFCQKYYTDL…PCWKRKRALC (101 aa)) folds into the C-type lectin domain. 17 cysteine pairs are disulfide-bonded: C60-C158, C131-C150, C163-C174, C168-C183, C185-C194, C200-C244, C230-C257, C262-C306, C292-C319, C324-C368, C354-C381, C386-C430, C416-C443, C458-C502, C488-C515, C520-C564, and C550-C577. Positions 121, 123, and 124 each coordinate Ca(2+). N123 provides a ligand contact to a carbohydrate. Residues E133 and N146 each coordinate a carbohydrate. Ca(2+)-binding residues include N146 and D147. Residues 159-195 (YRASCQDMSCSKQGECIETIGNYTCSCYPGFYGPECE) form the EGF-like domain. A glycan (N-linked (GlcNAc...) asparagine) is linked at N180. 6 consecutive Sushi domains span residues 198 to 259 (RECG…QCVA), 260 to 321 (VQCP…VCKA), 322 to 383 (LQCQ…ECQA), 384 to 445 (VTCA…TCEE), 456 to 517 (VQCP…TCRA), and 518 to 579 (VKCA…TCQA). 2 N-linked (GlcNAc...) asparagine glycosylation sites follow: N212 and N219. N336 is a glycosylation site (N-linked (GlcNAc...) asparagine). N481 carries N-linked (GlcNAc...) asparagine glycosylation. N-linked (GlcNAc...) asparagine glycans are attached at residues N532, N539, and N557. The chain crosses the membrane as a helical span at residues 588 to 611 (LTYVGGAAAGTTGLVTGSILLALL). Topologically, residues 612–646 (RRRCRQKDDGKSPLNPQSHLGTYGVFTNAAFDPSP) are cytoplasmic. Residues 634-637 (YGVF) carry the Endocytosis signal motif. The interaction with SNX17 stretch occupies residues 637 to 646 (FTNAAFDPSP).

This sequence belongs to the selectin/LECAM family. As to quaternary structure, interacts with SNX17. Interacts with SELPLG/PSGL1 and PODXL2 and mediates neutrophil adhesion and leukocyte rolling. This interaction requires the sialyl-Lewis X epitope of SELPLG and PODXL2, and specific tyrosine sulfation on SELPLG. Interacts (via C-type lectin domain) with alpha-IIb/beta3 integrin ITGA2B:ITGB3 and alpha-V/beta-3 integrin ITGAV:ITGB3. Interacts with alpha5/beta1 integrin ITGA5:ITGB1 and alpha4/beta1 integrin ITGA4:ITGB. Stored in the alpha-granules of platelets and Weibel-Palade bodies of endothelial cells. Upon cell activation by agonists, P-selectin is transported rapidly to the cell surface.

The protein localises to the cell membrane. Its function is as follows. Ca(2+)-dependent receptor for myeloid cells that binds to carbohydrates on neutrophils and monocytes. Mediates the interaction of activated endothelial cells or platelets with leukocytes. The ligand recognized is sialyl-Lewis X. Mediates rapid rolling of leukocyte rolling over vascular surfaces during the initial steps in inflammation through interaction with SELPLG. Mediates cell-cell interactions and cell adhesion via the interaction with integrin alpha-IIb/beta3 (ITGA2B:ITGB3) and integrin alpha-V/beta-3 (ITGAV:ITGB3). This Bos taurus (Bovine) protein is P-selectin (SELP).